Here is a 337-residue protein sequence, read N- to C-terminus: F420-dependent glucose-6-phosphate dehydrogenase (337 aa).

Asp44 is a coenzyme F420-(gamma-Glu)n binding site. Residue His45 is the Proton donor of the active site. Coenzyme F420-(gamma-Glu)n contacts are provided by residues Thr81 and Thr112–Gly113. Glu114 functions as the Proton acceptor in the catalytic mechanism. Residues Asn117, Gly180–Gly181, and Gly183–Val184 each bind coenzyme F420-(gamma-Glu)n. Residues Thr198, Lys201, Lys262, and Arg286 each coordinate substrate.

This sequence belongs to the F420-dependent glucose-6-phosphate dehydrogenase family. As to quaternary structure, homodimer.

The enzyme catalyses oxidized coenzyme F420-(gamma-L-Glu)(n) + D-glucose 6-phosphate + H(+) = 6-phospho-D-glucono-1,5-lactone + reduced coenzyme F420-(gamma-L-Glu)(n). In terms of biological role, catalyzes the coenzyme F420-dependent oxidation of glucose 6-phosphate (G6P) to 6-phosphogluconolactone. This is F420-dependent glucose-6-phosphate dehydrogenase from Kineococcus radiotolerans (strain ATCC BAA-149 / DSM 14245 / SRS30216).